Reading from the N-terminus, the 393-residue chain is Riboflavin biosynthesis protein RibBA (393 aa).

The segment at 1 to 200 (MQLDSIDTAL…IEDLEKYRKS (200 aa)) is DHBP synthase. D-ribulose 5-phosphate is bound by residues 27 to 28 (RE), D32, 139 to 143 (RRGHT), and E163. A Mg(2+)-binding site is contributed by E28. H142 contributes to the Mg(2+) binding site. The interval 201–393 (SISKLDAKAK…TKKEKMGHLI (193 aa)) is GTP cyclohydrolase II. 249-253 (RIHSA) contributes to the GTP binding site. Zn(2+)-binding residues include C254, C265, and C267. Residues Q270, 291-293 (EGR), and T313 contribute to the GTP site. D325 functions as the Proton acceptor; for GTP cyclohydrolase activity in the catalytic mechanism. The Nucleophile; for GTP cyclohydrolase activity role is filled by R327. 2 residues coordinate GTP: S348 and K353.

The protein in the N-terminal section; belongs to the DHBP synthase family. In the C-terminal section; belongs to the GTP cyclohydrolase II family. Mg(2+) is required as a cofactor. Mn(2+) serves as cofactor. Requires Zn(2+) as cofactor.

It catalyses the reaction D-ribulose 5-phosphate = (2S)-2-hydroxy-3-oxobutyl phosphate + formate + H(+). It carries out the reaction GTP + 4 H2O = 2,5-diamino-6-hydroxy-4-(5-phosphoribosylamino)-pyrimidine + formate + 2 phosphate + 3 H(+). It participates in cofactor biosynthesis; riboflavin biosynthesis; 2-hydroxy-3-oxobutyl phosphate from D-ribulose 5-phosphate: step 1/1. Its pathway is cofactor biosynthesis; riboflavin biosynthesis; 5-amino-6-(D-ribitylamino)uracil from GTP: step 1/4. Catalyzes the conversion of D-ribulose 5-phosphate to formate and 3,4-dihydroxy-2-butanone 4-phosphate. Functionally, catalyzes the conversion of GTP to 2,5-diamino-6-ribosylamino-4(3H)-pyrimidinone 5'-phosphate (DARP), formate and pyrophosphate. The chain is Riboflavin biosynthesis protein RibBA from Staphylococcus saprophyticus subsp. saprophyticus (strain ATCC 15305 / DSM 20229 / NCIMB 8711 / NCTC 7292 / S-41).